Reading from the N-terminus, the 331-residue chain is Cytosolic 5'-nucleotidase 3A (331 aa).

Aspartate 83 serves as the catalytic Nucleophile. The Mg(2+) site is built by aspartate 83 and aspartate 85. The active-site Proton donor is aspartate 85. Residue glutamate 130 participates in CMP binding. N(7)-methyl-GMP is bound by residues glutamate 130 and serine 151. Residues 198–199 (SA) and lysine 247 each bind substrate. Position 272 (aspartate 272) interacts with Mg(2+).

This sequence belongs to the pyrimidine 5'-nucleotidase family.

Its subcellular location is the cytoplasm. The enzyme catalyses N(7)-methyl-GMP + H2O = N(7)-methylguanosine + phosphate. The catalysed reaction is a ribonucleoside 5'-phosphate + H2O = a ribonucleoside + phosphate. Its function is as follows. Nucleotidase which shows specific activity towards cytidine monophosphate (CMP) and 7-methylguanosine monophosphate (m(7)GMP). CMP seems to be the preferred substrate. In Gallus gallus (Chicken), this protein is Cytosolic 5'-nucleotidase 3A (NT5C3A).